The chain runs to 324 residues: Beta-ketoacyl-[acyl-carrier-protein] synthase III (324 aa).

Residues cysteine 116 and histidine 251 contribute to the active site. The segment at 252 to 256 (QANLR) is ACP-binding. Asparagine 281 is a catalytic residue.

This sequence belongs to the thiolase-like superfamily. FabH family. In terms of assembly, homodimer.

The protein localises to the cytoplasm. The enzyme catalyses malonyl-[ACP] + acetyl-CoA + H(+) = 3-oxobutanoyl-[ACP] + CO2 + CoA. It functions in the pathway lipid metabolism; fatty acid biosynthesis. In terms of biological role, catalyzes the condensation reaction of fatty acid synthesis by the addition to an acyl acceptor of two carbons from malonyl-ACP. Catalyzes the first condensation reaction which initiates fatty acid synthesis and may therefore play a role in governing the total rate of fatty acid production. Possesses both acetoacetyl-ACP synthase and acetyl transacylase activities. Its substrate specificity determines the biosynthesis of branched-chain and/or straight-chain of fatty acids. The sequence is that of Beta-ketoacyl-[acyl-carrier-protein] synthase III from Xylella fastidiosa (strain 9a5c).